A 359-amino-acid chain; its full sequence is Molybdenum import ATP-binding protein ModC (359 aa).

The region spanning 1–229 (MLELNFSQQL…SALRPWLQRE (229 aa)) is the ABC transporter domain. An ATP-binding site is contributed by 31–38 (GLSGAGKT). The Mop domain maps to 289–354 (SSSIRNILPV…IKSVSFNRQN (66 aa)).

Belongs to the ABC transporter superfamily. Molybdate importer (TC 3.A.1.8) family. As to quaternary structure, the complex is composed of two ATP-binding proteins (ModC), two transmembrane proteins (ModB) and a solute-binding protein (ModA).

Its subcellular location is the cell inner membrane. It catalyses the reaction molybdate(out) + ATP + H2O = molybdate(in) + ADP + phosphate + H(+). In terms of biological role, part of the ABC transporter complex ModABC involved in molybdenum import. Responsible for energy coupling to the transport system. The sequence is that of Molybdenum import ATP-binding protein ModC from Yersinia pestis bv. Antiqua (strain Antiqua).